Here is a 401-residue protein sequence, read N- to C-terminus: Type I restriction enzyme EcoprrI specificity subunit (401 aa).

This sequence belongs to the type-I restriction system S methylase family. The type I restriction/modification system is composed of three polypeptides R, M and S; the restriction enzyme has stoichiometry R(2)M(2)S(1) while the methyltransferase is M(2)S(1).

Functionally, the specificity (S) subunit of a type I restriction enzyme; this subunit dictates DNA sequence specificity. The M and S subunits together form a methyltransferase (MTase) that methylates two adenine residues of the sequence 5'-CCAN(7)ATGC-3'. In the presence of the R subunit the complex can also act as an endonuclease, binding to the same target sequence but cutting the DNA some distance from this site. Whether the DNA is cut or modified depends on the methylation state of the target sequence. When the target site is unmodified, the DNA is cut. When the target site is hemimethylated, the complex acts as a maintenance MTase modifying the DNA so that both strands become methylated. After locating a non-methylated recognition site, the enzyme complex serves as a molecular motor that translocates DNA in an ATP-dependent manner until a collision occurs that triggers cleavage. The polypeptide is Type I restriction enzyme EcoprrI specificity subunit (prrB) (Escherichia coli).